Consider the following 120-residue polypeptide: Large ribosomal subunit protein uL18 (120 aa).

Residues 1–10 are compositionally biased toward basic and acidic residues; sequence MKLNRVESTR. The interval 1-26 is disordered; that stretch reads MKLNRVESTRSRHRRVRRKVGGTGDR. Over residues 11–20 the composition is skewed to basic residues; that stretch reads SRHRRVRRKV.

The protein belongs to the universal ribosomal protein uL18 family. Part of the 50S ribosomal subunit; part of the 5S rRNA/L5/L18/L25 subcomplex. Contacts the 5S and 23S rRNAs.

Its function is as follows. This is one of the proteins that bind and probably mediate the attachment of the 5S RNA into the large ribosomal subunit, where it forms part of the central protuberance. The protein is Large ribosomal subunit protein uL18 of Cyanothece sp. (strain PCC 7425 / ATCC 29141).